The following is a 100-amino-acid chain: Nucleoid-associated protein MYPU_0500 (100 aa).

Belongs to the YbaB/EbfC family. As to quaternary structure, homodimer.

The protein localises to the cytoplasm. It is found in the nucleoid. Its function is as follows. Binds to DNA and alters its conformation. May be involved in regulation of gene expression, nucleoid organization and DNA protection. The protein is Nucleoid-associated protein MYPU_0500 of Mycoplasmopsis pulmonis (strain UAB CTIP) (Mycoplasma pulmonis).